A 346-amino-acid polypeptide reads, in one-letter code: Transposase for insertion sequence element IS1533 (346 aa).

It belongs to the transposase IS1111A/IS1328/IS1533 family.

Required for the transposition of the insertion element. This chain is Transposase for insertion sequence element IS1533 (tnhA), found in Leptospira borgpetersenii.